The sequence spans 340 residues: Protein phosphatase PTC7 homolog fig (340 aa).

The PPM-type phosphatase domain occupies 58–314; it reads RAQAETIQAP…DDITVVLASV (257 aa). Mn(2+)-binding residues include D90, G91, and D236.

The protein belongs to the PP2C family. Mg(2+) serves as cofactor. It depends on Mn(2+) as a cofactor.

It catalyses the reaction O-phospho-L-seryl-[protein] + H2O = L-seryl-[protein] + phosphate. The catalysed reaction is O-phospho-L-threonyl-[protein] + H2O = L-threonyl-[protein] + phosphate. The chain is Protein phosphatase PTC7 homolog fig from Drosophila pseudoobscura pseudoobscura (Fruit fly).